The sequence spans 279 residues: Putative pyruvate, phosphate dikinase regulatory protein (279 aa).

152 to 159 (GVSRTSKS) is a binding site for ADP.

The protein belongs to the pyruvate, phosphate/water dikinase regulatory protein family. PDRP subfamily.

It catalyses the reaction N(tele)-phospho-L-histidyl/L-threonyl-[pyruvate, phosphate dikinase] + ADP = N(tele)-phospho-L-histidyl/O-phospho-L-threonyl-[pyruvate, phosphate dikinase] + AMP + H(+). It carries out the reaction N(tele)-phospho-L-histidyl/O-phospho-L-threonyl-[pyruvate, phosphate dikinase] + phosphate + H(+) = N(tele)-phospho-L-histidyl/L-threonyl-[pyruvate, phosphate dikinase] + diphosphate. Its function is as follows. Bifunctional serine/threonine kinase and phosphorylase involved in the regulation of the pyruvate, phosphate dikinase (PPDK) by catalyzing its phosphorylation/dephosphorylation. The polypeptide is Putative pyruvate, phosphate dikinase regulatory protein (Anaplasma marginale (strain St. Maries)).